Reading from the N-terminus, the 224-residue chain is Lipoprotein-releasing system ATP-binding protein LolD (224 aa).

The ABC transporter domain occupies 6–224 (VRLRELRRSF…VVRLHEGVLE (219 aa)). ATP is bound at residue 42-49 (GPSGSGKS).

This sequence belongs to the ABC transporter superfamily. Lipoprotein translocase (TC 3.A.1.125) family. The complex is composed of two ATP-binding proteins (LolD) and two transmembrane proteins (LolC and LolE).

Its subcellular location is the cell inner membrane. Part of the ABC transporter complex LolCDE involved in the translocation of mature outer membrane-directed lipoproteins, from the inner membrane to the periplasmic chaperone, LolA. Responsible for the formation of the LolA-lipoprotein complex in an ATP-dependent manner. The protein is Lipoprotein-releasing system ATP-binding protein LolD of Novosphingobium aromaticivorans (strain ATCC 700278 / DSM 12444 / CCUG 56034 / CIP 105152 / NBRC 16084 / F199).